Here is a 366-residue protein sequence, read N- to C-terminus: L-Ala-D/L-Glu epimerase (366 aa).

Residues arginine 24, threonine 135, and lysine 160 each contribute to the substrate site. The Proton acceptor; specific for (R)-substrate epimerization role is filled by lysine 162. Positions 191, 219, and 244 each coordinate Mg(2+). Lysine 268 serves as the catalytic Proton acceptor; specific for (S)-substrate epimerization. The substrate site is built by serine 296, isoleucine 298, aspartate 321, and aspartate 323.

Belongs to the mandelate racemase/muconate lactonizing enzyme family. Homooctamer; tetramer of dimers. Requires Mg(2+) as cofactor.

It carries out the reaction L-alanyl-L-glutamate = L-alanyl-D-glutamate. Its pathway is cell wall degradation; peptidoglycan degradation. Its function is as follows. Catalyzes the epimerization of L-Ala-D-Glu to L-Ala-L-Glu and has probably a role in the metabolism of the murein peptide, of which L-Ala-D-Glu is a component. Is also able to catalyze the reverse reaction and the epimerization of the other Ala-X dipeptides L-Ala-L-Asp, L-Ala-L-Leu, L-Ala-L-Met, and L-Ala-L-Ser. Is not able to epimerize other L-Ala-X dipeptides. Is also active with L-Ser-L-Glu and, oddly, L-Pro-L-Glu, but not with L-Glu-L-Glu, L-Lys-L-Glu, L-Lys-L-Ala, or D-Ala-D-Ala. The sequence is that of L-Ala-D/L-Glu epimerase (ykfB) from Bacillus subtilis (strain 168).